The following is a 91-amino-acid chain: Acylphosphatase (91 aa).

Positions 6–91 (CMRCYISGRV…WKDYISFDVL (86 aa)) constitute an Acylphosphatase-like domain. Catalysis depends on residues Arg21 and Asn39.

The protein belongs to the acylphosphatase family.

It carries out the reaction an acyl phosphate + H2O = a carboxylate + phosphate + H(+). The protein is Acylphosphatase (acyP) of Legionella pneumophila (strain Paris).